A 406-amino-acid polypeptide reads, in one-letter code: Fosmidomycin resistance protein (406 aa).

Topologically, residues 1-42 (MAMSEQPQPVAGAAASTTKARTSFGILGAISLSHLLNDMIQS) are periplasmic. 2 consecutive transmembrane segments (helical) span residues 43 to 63 (LILAIYPLLQSEFSLTFMQIG) and 64 to 84 (MITLTFQLASSLLQPVVGYWT). At 85 to 102 (DKYPMPWSLPIGMCFTLS) the chain is on the periplasmic side. A helical membrane pass occupies residues 103–123 (GLVLLALAGSFGAVLLAAALV). Residues 124-151 (GTGSSVFHPESSRVARMASGGRHGLAQS) are Cytoplasmic-facing. The chain crosses the membrane as a helical span at residues 152 to 172 (IFQVGGNFGSSLGPLLAAVII). Topologically, residues 173–177 (APYGK) are periplasmic. The helical transmembrane segment at 178 to 198 (GNVAWFVLAALLAIVVLAQIS) threads the bilayer. The Cytoplasmic segment spans residues 199–225 (RWYSAQHRMNKGKPKATIINPLPRNKV). A helical transmembrane segment spans residues 226 to 246 (VLAVSILLILIFSKYFYMASI). The Periplasmic portion of the chain corresponds to 247–266 (SSYYTFYLMQKFGLSIQNAQ). A helical transmembrane segment spans residues 267-287 (LHLFAFLFAVAAGTVIGGPVG). The Cytoplasmic portion of the chain corresponds to 288 to 294 (DKIGRKY). The helical transmembrane segment at 295 to 315 (VIWGSILGVAPFTLILPYASL) threads the bilayer. Residues 316–319 (HWTG) are Periplasmic-facing. The helical transmembrane segment at 320-340 (VLTVIIGFILASAFSAILVYA) threads the bilayer. Residues 341 to 353 (QELLPGRIGMVSG) lie on the Cytoplasmic side of the membrane. The chain crosses the membrane as a helical span at residues 354-374 (LFFGFAFGMGGLGAAVLGLIA). The Periplasmic segment spans residues 375–378 (DHTS). A helical membrane pass occupies residues 379 to 399 (IELVYKICAFLPLLGMLTIFL). The Cytoplasmic portion of the chain corresponds to 400–406 (PDNRHKD).

This sequence belongs to the major facilitator superfamily.

It is found in the cell inner membrane. Its function is as follows. Confers the resistance against fosmidomycin. The sequence is that of Fosmidomycin resistance protein (fsr) from Escherichia coli (strain K12).